The following is a 273-amino-acid chain: Formamidopyrimidine-DNA glycosylase (273 aa).

Pro-2 acts as the Schiff-base intermediate with DNA in catalysis. Glu-3 functions as the Proton donor in the catalytic mechanism. Lys-58 acts as the Proton donor; for beta-elimination activity in catalysis. DNA is bound by residues His-91 and Arg-110. Residues 238-272 (QVYGKTGQPCPRCASMIVKIKLGGRGTHLCPHCQK) form an FPG-type zinc finger. The active-site Proton donor; for delta-elimination activity is Arg-262.

The protein belongs to the FPG family. Monomer. Requires Zn(2+) as cofactor.

The enzyme catalyses Hydrolysis of DNA containing ring-opened 7-methylguanine residues, releasing 2,6-diamino-4-hydroxy-5-(N-methyl)formamidopyrimidine.. It carries out the reaction 2'-deoxyribonucleotide-(2'-deoxyribose 5'-phosphate)-2'-deoxyribonucleotide-DNA = a 3'-end 2'-deoxyribonucleotide-(2,3-dehydro-2,3-deoxyribose 5'-phosphate)-DNA + a 5'-end 5'-phospho-2'-deoxyribonucleoside-DNA + H(+). In terms of biological role, involved in base excision repair of DNA damaged by oxidation or by mutagenic agents. Acts as a DNA glycosylase that recognizes and removes damaged bases. Has a preference for oxidized purines, such as 7,8-dihydro-8-oxoguanine (8-oxoG). Has AP (apurinic/apyrimidinic) lyase activity and introduces nicks in the DNA strand. Cleaves the DNA backbone by beta-delta elimination to generate a single-strand break at the site of the removed base with both 3'- and 5'-phosphates. This chain is Formamidopyrimidine-DNA glycosylase, found in Streptococcus thermophilus (strain ATCC BAA-250 / LMG 18311).